Here is a 285-residue protein sequence, read N- to C-terminus: Polyamine aminopropyltransferase (285 aa).

The PABS domain maps to 5–238 (EMWYETLHTG…GIMTFAWASD (234 aa)). Position 33 (Gln-33) interacts with S-methyl-5'-thioadenosine. Spermidine contacts are provided by His-64 and Asp-88. S-methyl-5'-thioadenosine is bound by residues Glu-108 and 140–141 (DG). The Proton acceptor role is filled by Asp-158. 158–161 (DCTD) contacts spermidine. S-methyl-5'-thioadenosine is bound at residue Pro-165.

This sequence belongs to the spermidine/spermine synthase family. In terms of assembly, homodimer or homotetramer.

Its subcellular location is the cytoplasm. The enzyme catalyses S-adenosyl 3-(methylsulfanyl)propylamine + putrescine = S-methyl-5'-thioadenosine + spermidine + H(+). The protein operates within amine and polyamine biosynthesis; spermidine biosynthesis; spermidine from putrescine: step 1/1. In terms of biological role, catalyzes the irreversible transfer of a propylamine group from the amino donor S-adenosylmethioninamine (decarboxy-AdoMet) to putrescine (1,4-diaminobutane) to yield spermidine. This is Polyamine aminopropyltransferase from Erwinia tasmaniensis (strain DSM 17950 / CFBP 7177 / CIP 109463 / NCPPB 4357 / Et1/99).